We begin with the raw amino-acid sequence, 659 residues long: Biosynthetic arginine decarboxylase 2 (659 aa).

The residue at position 119 (Lys-119) is an N6-(pyridoxal phosphate)lysine. 311 to 321 (LNVGGGLAVDY) contacts substrate.

This sequence belongs to the Orn/Lys/Arg decarboxylase class-II family. SpeA subfamily. Mg(2+) serves as cofactor. Pyridoxal 5'-phosphate is required as a cofactor.

The catalysed reaction is L-arginine + H(+) = agmatine + CO2. In terms of biological role, catalyzes the biosynthesis of agmatine from arginine. The polypeptide is Biosynthetic arginine decarboxylase 2 (speA2) (Synechocystis sp. (strain ATCC 27184 / PCC 6803 / Kazusa)).